A 301-amino-acid chain; its full sequence is Lipoyl synthase (301 aa).

Positions 53, 58, 64, 79, 83, 86, and 290 each coordinate [4Fe-4S] cluster. In terms of domain architecture, Radical SAM core spans 65 to 279 (WSRKTATYML…RIYGKSIGFK (215 aa)).

This sequence belongs to the radical SAM superfamily. Lipoyl synthase family. The cofactor is [4Fe-4S] cluster.

It localises to the cytoplasm. The enzyme catalyses [[Fe-S] cluster scaffold protein carrying a second [4Fe-4S](2+) cluster] + N(6)-octanoyl-L-lysyl-[protein] + 2 oxidized [2Fe-2S]-[ferredoxin] + 2 S-adenosyl-L-methionine + 4 H(+) = [[Fe-S] cluster scaffold protein] + N(6)-[(R)-dihydrolipoyl]-L-lysyl-[protein] + 4 Fe(3+) + 2 hydrogen sulfide + 2 5'-deoxyadenosine + 2 L-methionine + 2 reduced [2Fe-2S]-[ferredoxin]. It participates in protein modification; protein lipoylation via endogenous pathway; protein N(6)-(lipoyl)lysine from octanoyl-[acyl-carrier-protein]: step 2/2. Catalyzes the radical-mediated insertion of two sulfur atoms into the C-6 and C-8 positions of the octanoyl moiety bound to the lipoyl domains of lipoate-dependent enzymes, thereby converting the octanoylated domains into lipoylated derivatives. The polypeptide is Lipoyl synthase (Leptospira interrogans serogroup Icterohaemorrhagiae serovar Lai (strain 56601)).